The sequence spans 445 residues: O-fucosyltransferase 23 (445 aa).

The helical; Signal-anchor for type II membrane protein transmembrane segment at 12–34 (IFSKSVACKCLVLVGIALFYRAL) threads the bilayer. Residues asparagine 97 and asparagine 179 are each glycosylated (N-linked (GlcNAc...) asparagine). 258-260 (HMR) contacts substrate. N-linked (GlcNAc...) asparagine glycosylation occurs at asparagine 294. Residue 374 to 375 (TF) participates in substrate binding. A glycan (N-linked (GlcNAc...) asparagine) is linked at asparagine 424.

The protein belongs to the glycosyltransferase GT106 family. In terms of tissue distribution, expressed in dry pollen grains and germinating pollen grains.

It localises to the golgi apparatus membrane. Its pathway is glycan metabolism. Functionally, probable protein O-fucosyltransferase required for correct pollen tube penetration through the stigma-style interface. May be involved in protein O-glycosylation events during pollen-pistil interactions. The protein is O-fucosyltransferase 23 of Arabidopsis thaliana (Mouse-ear cress).